The sequence spans 37 residues: Cytochrome b6-f complex subunit 5 (37 aa).

The helical transmembrane segment at 5–25 threads the bilayer; the sequence is LLSGIVLGLISITSAGLFVTA.

The protein belongs to the PetG family. As to quaternary structure, the 4 large subunits of the cytochrome b6-f complex are cytochrome b6, subunit IV (17 kDa polypeptide, PetD), cytochrome f and the Rieske protein, while the 4 small subunits are PetG, PetL, PetM and PetN. The complex functions as a dimer.

The protein localises to the plastid. Its subcellular location is the chloroplast thylakoid membrane. Functionally, component of the cytochrome b6-f complex, which mediates electron transfer between photosystem II (PSII) and photosystem I (PSI), cyclic electron flow around PSI, and state transitions. PetG is required for either the stability or assembly of the cytochrome b6-f complex. In Psilotum nudum (Whisk fern), this protein is Cytochrome b6-f complex subunit 5.